Consider the following 934-residue polypeptide: Protocadherin gamma-C3 (934 aa).

The N-terminal stretch at 1–31 (MVPEAWRSGLVSTGRVVGVLLLLGALNKAST) is a signal peptide. Cadherin domains lie at 32-135 (VIHY…NPAF), 136-244 (PTQE…APVF), 245-352 (NQSL…APEI), 353-457 (TVTS…PPQS), 458-567 (SQSS…APQV), and 572-685 (PGGS…APRE). The Extracellular portion of the chain corresponds to 32-693 (VIHYEIPEER…REQKKNLTFY (662 aa)). 6 N-linked (GlcNAc...) asparagine glycosylation sites follow: N245, N424, N478, N550, N615, and N689. Residues 694-714 (LLLSLILVSVGFVVTVFGVII) form a helical membrane-spanning segment. The Cytoplasmic portion of the chain corresponds to 715-934 (FKVYKWKQSR…KKKSGKKEKK (220 aa)). 2 disordered regions span residues 804-843 (ESAP…WPNN) and 904-934 (ATLT…KEKK). Positions 812 to 843 (APPNTDWRFSQAQRPGTSGSQNGDDTGTWPNN) are enriched in polar residues. A compositionally biased stretch (basic residues) spans 924 to 934 (NKKKSGKKEKK).

The protein localises to the cell membrane. Functionally, potential calcium-dependent cell-adhesion protein. May be involved in the establishment and maintenance of specific neuronal connections in the brain. The protein is Protocadherin gamma-C3 (PCDHGC3) of Homo sapiens (Human).